We begin with the raw amino-acid sequence, 600 residues long: Adenine deaminase (600 aa).

The protein belongs to the metallo-dependent hydrolases superfamily. Adenine deaminase family. Requires Mn(2+) as cofactor.

It carries out the reaction adenine + H2O + H(+) = hypoxanthine + NH4(+). The sequence is that of Adenine deaminase from Chelativorans sp. (strain BNC1).